A 188-amino-acid chain; its full sequence is PRA1 family protein 3 (188 aa).

Residue methionine 1 is modified to N-acetylmethionine. The Cytoplasmic segment spans residues 1-35 (MDVNIAPLRAWDDFFPGSDRFARPDFRDISKWNNR). Transmembrane regions (helical) follow at residues 36–56 (VVSN…MMIS) and 57–77 (VVGF…VLVF). Topologically, residues 78–93 (TGFVWAAHNKDILRRM) are cytoplasmic. The next 2 helical transmembrane spans lie at 94–114 (KKQY…FLIS) and 115–135 (LFGG…LMFI). The segment at 103–117 (MVVMLASYFLISLFG) is required for homodimer formation and heterodimer formation with ARL6IP1. Topologically, residues 136–188 (HASLRLRNLKNKLENKMEEIGLKRTPMGIVLDALEQQEETITKFSDYISKMKE) are cytoplasmic. The targeting to endoplasmic reticulum membrane stretch occupies residues 136 to 188 (HASLRLRNLKNKLENKMEEIGLKRTPMGIVLDALEQQEETITKFSDYISKMKE).

Belongs to the PRA1 family. As to quaternary structure, homodimer. Heterodimer with ARL6IP1. Forms multimers. Interacts with ARL6. Interacts with prenylated RAB1A and RAB3A. Interacts with SLC1A1/EAAC1. Interacts with RTN2 (via first transmembrane domain). Does not interact with VAMP1, VAMP2 or VAMP3.

The protein localises to the endoplasmic reticulum membrane. It is found in the cell membrane. Its subcellular location is the cytoplasm. The protein resides in the cytoskeleton. Functionally, regulates intracellular concentrations of taurine and glutamate. Negatively modulates SLC1A1/EAAC1 glutamate transport activity by decreasing its affinity for glutamate in a PKC activity-dependent manner. Plays a role in the retention of SLC1A1/EAAC1 in the endoplasmic reticulum. In Bos taurus (Bovine), this protein is PRA1 family protein 3 (ARL6IP5).